A 619-amino-acid polypeptide reads, in one-letter code: Eukaryotic translation initiation factor 2-alpha kinase 1 (619 aa).

Positions 1–40 are disordered; sequence MLGGSSVDGERDTDDDAAGAVAAPPAIDFPAEVSDPKYDE. Low complexity predominate over residues 18-28; the sequence is AGAVAAPPAID. An SIFI-degron motif is present at residues 85–104; the sequence is LHSKQVFKLLCQTFIKMGLL. The 414-residue stretch at 167 to 580 folds into the Protein kinase domain; that stretch reads FEELAILGKG…ALQLLQSELF (414 aa). ATP contacts are provided by residues 173–181 and Lys-196; that span reads LGKGGYGRV. Thr-283 is modified (phosphothreonine). Residues 408-413 form an HRM 1 repeat; the sequence is ACPYVM. Catalysis depends on Asp-440, which acts as the Proton acceptor. 3 positions are modified to phosphothreonine; by autocatalysis: Thr-483, Thr-485, and Thr-490. One copy of the HRM 2 repeat lies at 549–554; the sequence is RCPVQA.

It belongs to the protein kinase superfamily. Ser/Thr protein kinase family. GCN2 subfamily. Synthesized in an inactive form that binds to the N-terminal domain of CDC37. Has to be associated with a multiprotein complex containing Hsp90, CDC37 and PPP5C for maturation and activation by autophosphorylation. The phosphatase PPP5C modulates this activation. Homodimer; homodimerizes in presence of heme, forming a disulfide-linked inactive homodimer. Interacts with DELE1; binds both to full-length DELE1 and processed form of DELE1 (S-DELE1) in response to stress, leading to activate its protein kinase activity and trigger the integrated stress response (ISR). Post-translationally, activated by autophosphorylation; phosphorylated predominantly on serine and threonine residues, but also on tyrosine residues. Autophosphorylation at Thr-485 is required for kinase activation. The active autophosphorylated form apparently is largely refractory to cellular heme fluctuations. Ubiquitinated and degraded by the SIFI complex once the mitochondrial stress has been resolved, thereby providing stress response silencing. Within the SIFI complex, UBR4 initiates ubiquitin chain that are further elongated or branched by KCMF1. In terms of tissue distribution, expressed predominantly in erythroid cells, mature reticulocytes, as well as fetal liver nucleated erythroid cells. At much lower levels, expressed in hepatocytes and bone marrow-derived macrophages (at protein level).

It is found in the cytoplasm. The catalysed reaction is L-seryl-[protein] + ATP = O-phospho-L-seryl-[protein] + ADP + H(+). The enzyme catalyses L-threonyl-[protein] + ATP = O-phospho-L-threonyl-[protein] + ADP + H(+). Its activity is regulated as follows. In normal conditions, the protein kinase activity is inhibited; inhibition is relieved by various stress conditions. Inhibited by heme: in presence of heme, forms a disulfide-linked inactive homodimer. Heme depletion relieves inhibition and stimulates kinase activity by autophosphorylation. Inhibited by the heme metabolites biliverdin and bilirubin. Induced by oxidative stress generated by arsenite treatment. Binding of nitric oxide (NO) to the heme iron in the N-terminal heme-binding domain activates the kinase activity, while binding of carbon monoxide (CO) suppresses kinase activity. Protein kinase activity is also activated upon binding to DELE1 in response to various stress, triggering the integrated stress response (ISR): activated by full-length DELE1 in response to iron deficiency, while it is activated by the processed form of DELE1 (S-DELE1) in response to mitochondrial stress. Functionally, metabolic-stress sensing protein kinase that phosphorylates the alpha subunit of eukaryotic translation initiation factor 2 (EIF2S1/eIF-2-alpha) in response to various stress conditions. Key activator of the integrated stress response (ISR) required for adaptation to various stress, such as heme deficiency, oxidative stress, osmotic shock, mitochondrial dysfunction and heat shock. EIF2S1/eIF-2-alpha phosphorylation in response to stress converts EIF2S1/eIF-2-alpha in a global protein synthesis inhibitor, leading to a global attenuation of cap-dependent translation, while concomitantly initiating the preferential translation of ISR-specific mRNAs, such as the transcriptional activator ATF4, and hence allowing ATF4-mediated reprogramming. Acts as a key sensor of heme-deficiency: in normal conditions, binds hemin via a cysteine thiolate and histidine nitrogenous coordination, leading to inhibit the protein kinase activity. This binding occurs with moderate affinity, allowing it to sense the heme concentration within the cell: heme depletion relieves inhibition and stimulates kinase activity, activating the ISR. Thanks to this unique heme-sensing capacity, plays a crucial role to shut off protein synthesis during acute heme-deficient conditions. In red blood cells (RBCs), controls hemoglobin synthesis ensuring a coordinated regulation of the synthesis of its heme and globin moieties. It thereby plays an essential protective role for RBC survival in anemias of iron deficiency. Iron deficiency also triggers activation by full-length DELE1. Also activates the ISR in response to mitochondrial dysfunction: HRI/EIF2AK1 protein kinase activity is activated upon binding to the processed form of DELE1 (S-DELE1), thereby promoting the ATF4-mediated reprogramming. Also acts as an activator of mitophagy in response to mitochondrial damage: catalyzes phosphorylation of eIF-2-alpha (EIF2S1) following activation by S-DELE1, thereby promoting mitochondrial localization of EIF2S1, triggering PRKN-independent mitophagy. This chain is Eukaryotic translation initiation factor 2-alpha kinase 1, found in Mus musculus (Mouse).